The primary structure comprises 333 residues: Methionine import ATP-binding protein MetN 1 (333 aa).

Positions 2-241 (ITFEGVEKVY…PETETAKSFV (240 aa)) constitute an ABC transporter domain. 38–45 (GFSGAGKS) provides a ligand contact to ATP.

The protein belongs to the ABC transporter superfamily. Methionine importer (TC 3.A.1.24) family. The complex is composed of two ATP-binding proteins (MetN), two transmembrane proteins (MetI) and a solute-binding protein (MetQ).

The protein localises to the cell membrane. The catalysed reaction is L-methionine(out) + ATP + H2O = L-methionine(in) + ADP + phosphate + H(+). It catalyses the reaction D-methionine(out) + ATP + H2O = D-methionine(in) + ADP + phosphate + H(+). Functionally, part of the ABC transporter complex MetNIQ involved in methionine import. Responsible for energy coupling to the transport system. In Bacillus licheniformis (strain ATCC 14580 / DSM 13 / JCM 2505 / CCUG 7422 / NBRC 12200 / NCIMB 9375 / NCTC 10341 / NRRL NRS-1264 / Gibson 46), this protein is Methionine import ATP-binding protein MetN 1.